Here is a 90-residue protein sequence, read N- to C-terminus: Small ribosomal subunit protein bS16 (90 aa).

It belongs to the bacterial ribosomal protein bS16 family.

In Streptococcus thermophilus (strain CNRZ 1066), this protein is Small ribosomal subunit protein bS16.